The sequence spans 106 residues: Large ribosomal subunit protein P1A (106 aa).

The disordered stretch occupies residues 74–106 (AGGGAAAEEAAEEEKEEEAKEESDDDMGFGLFD). Acidic residues predominate over residues 82 to 100 (EAAEEEKEEEAKEESDDDM).

It belongs to the eukaryotic ribosomal protein P1/P2 family. Component of the large ribosomal subunit (LSU). Mature ribosomes consist of a small (40S) and a large (60S) subunit. The 40S subunit contains about 32 different proteins and 1 molecule of RNA (18S). The 60S subunit contains 45 different proteins and 3 molecules of RNA (25S, 5.8S and 5S). The 5 acidic ribosomal P-proteins form the stalk structure of the 60S subunit. They are organized as a pentameric complex in which uL10/P0 interacts with 2 heterodimers, P1A-P2B and P1B-P2A. In terms of processing, phosphorylated.

The protein localises to the cytoplasm. Its function is as follows. Component of the ribosome, a large ribonucleoprotein complex responsible for the synthesis of proteins in the cell. The small ribosomal subunit (SSU) binds messenger RNAs (mRNAs) and translates the encoded message by selecting cognate aminoacyl-transfer RNA (tRNA) molecules. The large subunit (LSU) contains the ribosomal catalytic site termed the peptidyl transferase center (PTC), which catalyzes the formation of peptide bonds, thereby polymerizing the amino acids delivered by tRNAs into a polypeptide chain. The nascent polypeptides leave the ribosome through a tunnel in the LSU and interact with protein factors that function in enzymatic processing, targeting, and the membrane insertion of nascent chains at the exit of the ribosomal tunnel. The chain is Large ribosomal subunit protein P1A (RPP1A) from Candida albicans (strain SC5314 / ATCC MYA-2876) (Yeast).